The following is a 450-amino-acid chain: Glucose-6-phosphate isomerase (450 aa).

E291 serves as the catalytic Proton donor. Residues H312 and K426 contribute to the active site.

This sequence belongs to the GPI family.

It is found in the cytoplasm. The enzyme catalyses alpha-D-glucose 6-phosphate = beta-D-fructose 6-phosphate. Its pathway is carbohydrate biosynthesis; gluconeogenesis. The protein operates within carbohydrate degradation; glycolysis; D-glyceraldehyde 3-phosphate and glycerone phosphate from D-glucose: step 2/4. Its function is as follows. Catalyzes the reversible isomerization of glucose-6-phosphate to fructose-6-phosphate. This chain is Glucose-6-phosphate isomerase, found in Clostridium perfringens (strain SM101 / Type A).